A 99-amino-acid chain; its full sequence is Nucleoid-associated protein LL0120 (99 aa).

Belongs to the YbaB/EbfC family. Homodimer.

It is found in the cytoplasm. Its subcellular location is the nucleoid. Binds to DNA and alters its conformation. May be involved in regulation of gene expression, nucleoid organization and DNA protection. This chain is Nucleoid-associated protein LL0120 (ybcG), found in Lactococcus lactis subsp. lactis (strain IL1403) (Streptococcus lactis).